The chain runs to 406 residues: MTIRHILAIRKKSLELPSDLKTFLRVLANCQHLKKNKKCRRTIFSVDFQNNQRQKPSNFHFWTVIKKFSKKILKSFIIKFGNNGTIAVVFSIFPTGATPSLTFLFQALGKGAYGNVYRVRSLHDGKDYALKQIMISSKNEGIPQSVLREITVMKHLARKAHPNIISLKSVFHQLDPVRAILKINMIMERCDWDLHTFLRNIPRGVPEQQAKHVTAQIVRALDFLHTHSIIHRDLKPQNILLNRDQTVKLADFGLSKEYSNTTAFTTLVVTLWYRSPEVLLQSYYNSTVDMWALGCIVSEIYCRQPLFVGQNEAEQLTDIFKKMGTPVGKDWPSESVIARDSFPQYRPTNLKDLSPQMSKQAIEFVQQCLRYDHSKRLSARGALSHPFLKPAVATKSRVLKQINFNK.

A Protein kinase domain is found at 102–388 (TFLFQALGKG…ARGALSHPFL (287 aa)). Residues 108–116 (LGKGAYGNV) and lysine 131 contribute to the ATP site. Catalysis depends on aspartate 233, which acts as the Proton acceptor. Residues asparagine 238 and aspartate 251 each coordinate Mg(2+).

This sequence belongs to the protein kinase superfamily. CMGC Ser/Thr protein kinase family. CDC2/CDKX subfamily. In terms of assembly, interacts with cyd-1; the interaction is likely involved in regulating cdk-4 activity. Mg(2+) serves as cofactor.

The catalysed reaction is L-seryl-[protein] + ATP = O-phospho-L-seryl-[protein] + ADP + H(+). It catalyses the reaction L-threonyl-[protein] + ATP = O-phospho-L-threonyl-[protein] + ADP + H(+). Serine/threonine-protein kinase which, in association with cyclin D-like protein cyd-1, is required for the progression through the G1 phase of the cell cycle during postembryonic development by phosphorylating and inhibiting lin-35 and fzr-1. In complex with cyd-1, involved in sex determination during gonadogenesis by regulating the asymmetric division of the somatic gonadal precursor cell (SGP). The protein is Cyclin-dependent kinase 4 homolog of Caenorhabditis elegans.